The primary structure comprises 284 residues: Elongation factor Ts (284 aa).

Residues 80–83 (TDFV) are involved in Mg(2+) ion dislocation from EF-Tu.

It belongs to the EF-Ts family.

It localises to the cytoplasm. Functionally, associates with the EF-Tu.GDP complex and induces the exchange of GDP to GTP. It remains bound to the aminoacyl-tRNA.EF-Tu.GTP complex up to the GTP hydrolysis stage on the ribosome. The polypeptide is Elongation factor Ts (Neisseria meningitidis serogroup A / serotype 4A (strain DSM 15465 / Z2491)).